Here is a 495-residue protein sequence, read N- to C-terminus: Tripartite motif-containing protein 5 (495 aa).

Alanine 2 is subject to N-acetylalanine. The segment at 15 to 60 (CPICLELLTEPLSLHCGHSFCQACITANHKKSMLYKEGERSCPVCR) adopts an RING-type zinc-finger fold. At serine 87 the chain carries Phosphoserine. A B box-type zinc finger spans residues 92-133 (QKVDHCARHGEKLLLFCQEDRKVICWLCERSQEHRGHHTFLM). 4 residues coordinate Zn(2+): cysteine 97, histidine 100, cysteine 119, and histidine 125. The stretch at 137 to 225 (AQEYHVKLQT…LTKSETEMVQ (89 aa)) forms a coiled coil. The tract at residues 187 to 200 (FEQLREILDWEESN) is required for interaction with GABARAP and for autophagy. In terms of domain architecture, B30.2/SPRY spans 283–495 (LKGILDMFRE…VPMTLCSPSS (213 aa)).

Belongs to the TRIM/RBCC family. Can form homodimers and homotrimers. In addition to lower-order dimerization, also exhibits a higher-order multimerization and both low- and high-order multimerizations are essential for its restriction activity. Interacts with BTBD1 and BTBD2. Interacts with PSMC4, PSMC5, PSMD7 and HSPA8/HSC70. Interacts (via B30.2/SPRY domain) with HSPA1A/B. Interacts with PSMC2, MAP3K7/TAK1, TAB2 and TAB3. Interacts with SQSTM1. Interacts with TRIM6 and TRIM34. Interacts with ULK1 (phosphorylated form), GABARAP, GABARAPL1, GABARAPL2, MAP1LC3A, MAP1LC3C and BECN1. Post-translationally, degraded in a proteasome-independent fashion in the absence of viral infection but in a proteasome-dependent fashion following exposure to restriction sensitive virus. Autoubiquitinated in a RING finger- and UBE2D2-dependent manner. Monoubiquitinated by TRIM21. Deubiquitinated by Yersinia YopJ. Ubiquitination may not lead to proteasomal degradation.

The protein resides in the cytoplasm. The protein localises to the nucleus. It carries out the reaction S-ubiquitinyl-[E2 ubiquitin-conjugating enzyme]-L-cysteine + [acceptor protein]-L-lysine = [E2 ubiquitin-conjugating enzyme]-L-cysteine + N(6)-ubiquitinyl-[acceptor protein]-L-lysine.. It functions in the pathway protein modification; protein ubiquitination. In terms of biological role, capsid-specific restriction factor that prevents infection from non-host-adapted retroviruses. Blocks viral replication early in the life cycle, after viral entry but before reverse transcription. In addition to acting as a capsid-specific restriction factor, also acts as a pattern recognition receptor that activates innate immune signaling in response to the retroviral capsid lattice. Binding to the viral capsid triggers its E3 ubiquitin ligase activity, and in concert with the heterodimeric ubiquitin conjugating enzyme complex UBE2V1-UBE2N (also known as UBC13-UEV1A complex) generates 'Lys-63'-linked polyubiquitin chains, which in turn are catalysts in the autophosphorylation of the MAP3K7/TAK1 complex (includes TAK1, TAB2, and TAB3). Activation of the MAP3K7/TAK1 complex by autophosphorylation results in the induction and expression of NF-kappa-B and MAPK-responsive inflammatory genes, thereby leading to an innate immune response in the infected cell. Plays a role in regulating autophagy through activation of autophagy regulator BECN1 by causing its dissociation from its inhibitors BCL2 and TAB2. In Pygathrix nemaeus (Red-shanked douc langur), this protein is Tripartite motif-containing protein 5 (TRIM5).